The primary structure comprises 254 residues: MTNSGKTGGKSGKGGTGGARALKVRVKTARKRSNSSTRWLQRQLNDPYVHAAKREGYRSRAAFKLAEIDDKYRFLKPGGRVVDLGCAPGGWCQVAVARVKAEGGDAGAEGRHGRVIGLDYLEMDPVPGATILQLDFLSEGADDQVKELLAGEADVVLSDMAAPTTGHKQTDHMRIMSLCEIAAHFATEVLAPGGTFLAKVLRGGTENELLVLLKQHFKTVRHVKPKASRADSAEMYVLAQGFKGRSESPLDDAE.

Residues 1–18 (MTNSGKTGGKSGKGGTGG) are compositionally biased toward gly residues. Residues 1–26 (MTNSGKTGGKSGKGGTGGARALKVRV) form a disordered region. S-adenosyl-L-methionine-binding residues include Gly-89, Trp-91, Asp-119, Asp-135, and Asp-159. The Proton acceptor role is filled by Lys-199.

This sequence belongs to the class I-like SAM-binding methyltransferase superfamily. RNA methyltransferase RlmE family.

It localises to the cytoplasm. It carries out the reaction uridine(2552) in 23S rRNA + S-adenosyl-L-methionine = 2'-O-methyluridine(2552) in 23S rRNA + S-adenosyl-L-homocysteine + H(+). Its function is as follows. Specifically methylates the uridine in position 2552 of 23S rRNA at the 2'-O position of the ribose in the fully assembled 50S ribosomal subunit. This is Ribosomal RNA large subunit methyltransferase E from Parvibaculum lavamentivorans (strain DS-1 / DSM 13023 / NCIMB 13966).